We begin with the raw amino-acid sequence, 488 residues long: Aspartyl/glutamyl-tRNA(Asn/Gln) amidotransferase subunit B (488 aa).

This sequence belongs to the GatB/GatE family. GatB subfamily. As to quaternary structure, heterotrimer of A, B and C subunits.

The enzyme catalyses L-glutamyl-tRNA(Gln) + L-glutamine + ATP + H2O = L-glutaminyl-tRNA(Gln) + L-glutamate + ADP + phosphate + H(+). It carries out the reaction L-aspartyl-tRNA(Asn) + L-glutamine + ATP + H2O = L-asparaginyl-tRNA(Asn) + L-glutamate + ADP + phosphate + 2 H(+). Allows the formation of correctly charged Asn-tRNA(Asn) or Gln-tRNA(Gln) through the transamidation of misacylated Asp-tRNA(Asn) or Glu-tRNA(Gln) in organisms which lack either or both of asparaginyl-tRNA or glutaminyl-tRNA synthetases. The reaction takes place in the presence of glutamine and ATP through an activated phospho-Asp-tRNA(Asn) or phospho-Glu-tRNA(Gln). This chain is Aspartyl/glutamyl-tRNA(Asn/Gln) amidotransferase subunit B, found in Neorickettsia sennetsu (strain ATCC VR-367 / Miyayama) (Ehrlichia sennetsu).